The sequence spans 473 residues: ATP synthase subunit beta (473 aa).

Glycine 153 to threonine 160 serves as a coordination point for ATP.

Belongs to the ATPase alpha/beta chains family. In terms of assembly, F-type ATPases have 2 components, CF(1) - the catalytic core - and CF(0) - the membrane proton channel. CF(1) has five subunits: alpha(3), beta(3), gamma(1), delta(1), epsilon(1). CF(0) has three main subunits: a(1), b(2) and c(9-12). The alpha and beta chains form an alternating ring which encloses part of the gamma chain. CF(1) is attached to CF(0) by a central stalk formed by the gamma and epsilon chains, while a peripheral stalk is formed by the delta and b chains.

The protein localises to the cell inner membrane. It catalyses the reaction ATP + H2O + 4 H(+)(in) = ADP + phosphate + 5 H(+)(out). In terms of biological role, produces ATP from ADP in the presence of a proton gradient across the membrane. The catalytic sites are hosted primarily by the beta subunits. The protein is ATP synthase subunit beta of Rickettsia bellii (strain RML369-C).